The following is a 480-amino-acid chain: Bindin (480 aa).

A signal peptide spans 1–20; it reads MDSQVLPLILLIIVFAASSA. Positions 21–247 are excised as a propeptide; it reads HGHFPHRTNQ…GEMRAERQRR (227 aa). Residues 161-211 form a disordered region; that stretch reads AEMRHRRSAKDDDVNKRASPRKGSSPAGKKVQIMEQDAGKGDAHNEKEVVK. The span at 197-211 shows a compositional bias: basic and acidic residues; it reads DAGKGDAHNEKEVVK. Positions 377–385 are fucose-binding domain; sequence LRHLRHHSN. The chain crosses the membrane as a helical span at residues 431–451; it reads GAGAVAGAAMAAGMPPYPGGA. The interval 452–480 is disordered; sequence QGGMRVGGQPQNPMGGNAYNPMTGYRQQG.

The protein belongs to the bindin family.

The protein localises to the cytoplasmic vesicle. It localises to the secretory vesicle. The protein resides in the acrosome membrane. Its function is as follows. Species-specific sea urchin sperm protein required for adhesion of sperm to the egg surface during fertilization. Bindin coats the acrosomal process after it is externalized by the acrosome reaction. It binds to sulfated, fucose-containing polysaccharides on the vitelline layer receptor proteoglycans which cover the egg plasma membrane. In Arbacia punctulata (Punctuate sea urchin), this protein is Bindin.